The chain runs to 228 residues: UPF0056 membrane protein MJ0972 (228 aa).

5 consecutive transmembrane segments (helical) span residues 22–42, 68–88, 133–153, 163–183, and 201–221; these read FYIY…LIPI, VVLL…GITI, VPLA…MILI, GVVV…LSLT, and IMGL…IVGL.

The protein belongs to the UPF0056 (MarC) family.

Its subcellular location is the cell membrane. The polypeptide is UPF0056 membrane protein MJ0972 (Methanocaldococcus jannaschii (strain ATCC 43067 / DSM 2661 / JAL-1 / JCM 10045 / NBRC 100440) (Methanococcus jannaschii)).